Here is a 215-residue protein sequence, read N- to C-terminus: Protein GrpE (215 aa).

The segment covering methionine 1–glycine 28 has biased composition (polar residues). Residues methionine 1 to glutamate 52 are disordered. The segment covering glutamine 29–glutamate 52 has biased composition (low complexity).

This sequence belongs to the GrpE family. In terms of assembly, homodimer.

It localises to the cytoplasm. Its function is as follows. Participates actively in the response to hyperosmotic and heat shock by preventing the aggregation of stress-denatured proteins, in association with DnaK and GrpE. It is the nucleotide exchange factor for DnaK and may function as a thermosensor. Unfolded proteins bind initially to DnaJ; upon interaction with the DnaJ-bound protein, DnaK hydrolyzes its bound ATP, resulting in the formation of a stable complex. GrpE releases ADP from DnaK; ATP binding to DnaK triggers the release of the substrate protein, thus completing the reaction cycle. Several rounds of ATP-dependent interactions between DnaJ, DnaK and GrpE are required for fully efficient folding. This Ralstonia pickettii (strain 12J) protein is Protein GrpE.